A 308-amino-acid chain; its full sequence is MAIADGKVSLKHLVTMETLTNEEVLGMIRRGGDFKNGRADFQLDRQYFAANLFFENSTRTHKSFEVAEKKLGLDVIEFDAGTSSVNKGETLYDTILTMSALGVDICVVRHSEVDYYKQLIDSRTIQTSIVNGGDGSGQHPSQCLLDLMTIYEEFGTFGNLKICIAGDITHSRVAKSNMRILKRLGAQIYFAGPTEWYSSEFDVYGQHVAIDDVIEDLNVLMLLRVQHERHRNDKGFSKEEYHTLYGLTEERYAKLADQAIIMHPAPVNRDVEIADSLVEAPKARIVTQMQNGVFVRMAIIEAILNGKA.

The carbamoyl phosphate site is built by R59 and T60. K87 contacts L-aspartate. Residues R109, H139, and Q142 each contribute to the carbamoyl phosphate site. The L-aspartate site is built by R172 and R224. The carbamoyl phosphate site is built by A265 and P266.

This sequence belongs to the aspartate/ornithine carbamoyltransferase superfamily. ATCase family. Heterododecamer (2C3:3R2) of six catalytic PyrB chains organized as two trimers (C3), and six regulatory PyrI chains organized as three dimers (R2).

It carries out the reaction carbamoyl phosphate + L-aspartate = N-carbamoyl-L-aspartate + phosphate + H(+). It participates in pyrimidine metabolism; UMP biosynthesis via de novo pathway; (S)-dihydroorotate from bicarbonate: step 2/3. In terms of biological role, catalyzes the condensation of carbamoyl phosphate and aspartate to form carbamoyl aspartate and inorganic phosphate, the committed step in the de novo pyrimidine nucleotide biosynthesis pathway. The sequence is that of Aspartate carbamoyltransferase catalytic subunit from Streptococcus thermophilus (strain ATCC BAA-491 / LMD-9).